A 326-amino-acid polypeptide reads, in one-letter code: Flotillin-like protein FloA (326 aa).

2 helical membrane passes run 6 to 26 (IILF…GSSV) and 27 to 47 (SLWI…IVFM).

Belongs to the flotillin-like FloA family. As to quaternary structure, homooligomerizes.

It localises to the cell membrane. The protein resides in the membrane raft. Found in functional membrane microdomains (FMM) that may be equivalent to eukaryotic membrane rafts. FMMs are highly dynamic and increase in number as cells age. Flotillins are thought to be important factors in membrane fluidity. This is Flotillin-like protein FloA from Desulfosudis oleivorans (strain DSM 6200 / JCM 39069 / Hxd3) (Desulfococcus oleovorans).